The following is a 306-amino-acid chain: Heterogeneous nuclear ribonucleoproteins C1/C2 (306 aa).

The residue at position 2 (A2) is an N-acetylalanine. Glycyl lysine isopeptide (Lys-Gly) (interchain with G-Cter in SUMO2) cross-links involve residues K8, K50, K89, and K94. The RRM domain maps to 16–87; the sequence is SRVFIGNLNT…QVLDINLAAE (72 aa). Phosphoserine is present on residues S107 and V108. T109 carries the phosphothreonine modification. A phosphoserine mark is found at S113, S115, and S121. 2 disordered regions span residues 139–190 and 221–306; these read YPAR…KLKG and QSKQ…EDDS. A Nuclear localization signal motif is present at residues 155-161; it reads PSKRQRV. Residues S162 and S166 each carry the phosphoserine modification. Over residues 175 to 185 the composition is skewed to low complexity; the sequence is SKSGQRGSSKS. K176 bears the N6-acetyllysine; alternate mark. A Glycyl lysine isopeptide (Lys-Gly) (interchain with G-Cter in SUMO2); alternate cross-link involves residue K176. A coiled-coil region spans residues 190–238; that stretch reads GDDLQAIKKELTQIKQKVDSLLENLEKIEKEQSKQAVEMKNDKSEEEQS. Over residues 221–232 the composition is skewed to basic and acidic residues; the sequence is QSKQAVEMKNDK. Glycyl lysine isopeptide (Lys-Gly) (interchain with G-Cter in SUMO2) cross-links involve residues K223 and K229. K232 is covalently cross-linked (Glycyl lysine isopeptide (Lys-Gly) (interchain with G-Cter in SUMO2); alternate). Residue K232 forms a Glycyl lysine isopeptide (Lys-Gly) (interchain with G-Cter in SUMO1); alternate linkage. 4 positions are modified to phosphoserine: S233, S238, S239, and S241. Residues 242 to 253 show a composition bias toward basic and acidic residues; it reads VKKDETNVKMES. Residues K243 and K244 each participate in a glycyl lysine isopeptide (Lys-Gly) (interchain with G-Cter in SUMO2) cross-link. Residue K250 forms a Glycyl lysine isopeptide (Lys-Gly) (interchain with G-Cter in SUMO2); alternate linkage. K250 is covalently cross-linked (Glycyl lysine isopeptide (Lys-Gly) (interchain with G-Cter in SUMO); alternate). Phosphoserine is present on residues S253 and S260. A compositionally biased stretch (acidic residues) spans 255 to 276; it reads GGADDSAEEGDLLDDDDNEDRG. Residues 277–287 are compositionally biased toward basic and acidic residues; the sequence is DDQLELIKDDE. Acidic residues predominate over residues 288-306; sequence KEAEEGEDDRDSANGEDDS. A phosphoserine mark is found at S299 and S306.

The protein belongs to the RRM HNRPC family. RALY subfamily. Tetramer composed of 3 copies of isoform C1 and 1 copy of isoform C2. Assembly of 3 tetramers with bound pre-mRNA gives rise to a 19S complex that interacts with HNRNPA2B1 tetramers. Component of the 40S hnRNP particle. Identified in the spliceosome C complex. Interacts with IGF2BP1. Interacts with DHX9; this interaction is direct, enhanced probably by their concomitant binding to RNA and mediates the attachment to actin filaments. Interacts with PPIA/CYPA. Interacts with YWHAE. Phosphorylated on Ser-260 and Ser-299 in resting cells. Phosphorylated on Ser-253 and on 1 serine residue in the poly-Ser stretch at position 238 in response to hydrogen peroxide. Post-translationally, sumoylated. Sumoylation reduces affinity for mRNA. In terms of processing, ubiquitinated and degraded after nucleo-cytoplasmic transport by YWHAE.

Its subcellular location is the nucleus. Functionally, binds pre-mRNA and nucleates the assembly of 40S hnRNP particles. Interacts with poly-U tracts in the 3'-UTR or 5'-UTR of mRNA and modulates the stability and the level of translation of bound mRNA molecules. Single HNRNPC tetramers bind 230-240 nucleotides. Trimers of HNRNPC tetramers bind 700 nucleotides. May play a role in the early steps of spliceosome assembly and pre-mRNA splicing. N6-methyladenosine (m6A) has been shown to alter the local structure in mRNAs and long non-coding RNAs (lncRNAs) via a mechanism named 'm(6)A-switch', facilitating binding of HNRNPC, leading to regulation of mRNA splicing. This chain is Heterogeneous nuclear ribonucleoproteins C1/C2 (HNRNPC), found in Homo sapiens (Human).